The primary structure comprises 159 residues: ATP synthase subunit b (159 aa).

The chain crosses the membrane as a helical span at residues Val-7–Trp-27.

It belongs to the ATPase B chain family. F-type ATPases have 2 components, F(1) - the catalytic core - and F(0) - the membrane proton channel. F(1) has five subunits: alpha(3), beta(3), gamma(1), delta(1), epsilon(1). F(0) has three main subunits: a(1), b(2) and c(10-14). The alpha and beta chains form an alternating ring which encloses part of the gamma chain. F(1) is attached to F(0) by a central stalk formed by the gamma and epsilon chains, while a peripheral stalk is formed by the delta and b chains.

It localises to the cell membrane. F(1)F(0) ATP synthase produces ATP from ADP in the presence of a proton or sodium gradient. F-type ATPases consist of two structural domains, F(1) containing the extramembraneous catalytic core and F(0) containing the membrane proton channel, linked together by a central stalk and a peripheral stalk. During catalysis, ATP synthesis in the catalytic domain of F(1) is coupled via a rotary mechanism of the central stalk subunits to proton translocation. Its function is as follows. Component of the F(0) channel, it forms part of the peripheral stalk, linking F(1) to F(0). The sequence is that of ATP synthase subunit b from Clostridium botulinum (strain Alaska E43 / Type E3).